The primary structure comprises 170 residues: uncharacterized protein (170 aa).

This is an uncharacterized protein from Acidianus convivator (ATV).